The primary structure comprises 561 residues: Arginine--tRNA ligase (561 aa).

Positions 123-133 match the 'HIGH' region motif; that stretch reads PNIAKDMHVGH.

Belongs to the class-I aminoacyl-tRNA synthetase family. In terms of assembly, monomer.

It localises to the cytoplasm. The catalysed reaction is tRNA(Arg) + L-arginine + ATP = L-arginyl-tRNA(Arg) + AMP + diphosphate. The sequence is that of Arginine--tRNA ligase (argS) from Chlamydia pneumoniae (Chlamydophila pneumoniae).